The chain runs to 105 residues: Large ribosomal subunit protein bL21 (105 aa).

Belongs to the bacterial ribosomal protein bL21 family. Part of the 50S ribosomal subunit. Contacts protein L20.

This protein binds to 23S rRNA in the presence of protein L20. In Rickettsia prowazekii (strain Madrid E), this protein is Large ribosomal subunit protein bL21.